The chain runs to 131 residues: Glycine cleavage system H protein (131 aa).

The Lipoyl-binding domain maps to threonine 24–glutamine 106. Lysine 65 is subject to N6-lipoyllysine.

The protein belongs to the GcvH family. The glycine cleavage system is composed of four proteins: P, T, L and H. It depends on (R)-lipoate as a cofactor.

In terms of biological role, the glycine cleavage system catalyzes the degradation of glycine. The H protein shuttles the methylamine group of glycine from the P protein to the T protein. The polypeptide is Glycine cleavage system H protein (Mycolicibacterium gilvum (strain PYR-GCK) (Mycobacterium gilvum (strain PYR-GCK))).